The sequence spans 446 residues: Pre-rRNA-processing protein crb3/ipi3 (446 aa).

WD repeat units follow at residues 74–113, 116–155, 172–214, 216–257, and 294–333; these read ILPE…LIYF, AHYQ…DQNS, GHKR…LLTT, ALPS…SNNV, and SCQS…VLRR.

The protein belongs to the WD repeat IPI3/WDR18 family. Component of the RIX1 complex, composed of ipi1, rix1/ipi2 and crb3/ipi3 in a 1:2:2 stoichiometry. The complex interacts (via rix1) with mdn1 (via its hexameric AAA ATPase ring) and the pre-60S ribosome particles. Interacts with rix1, gcr3 and Las1.

The protein resides in the nucleus. It localises to the chromosome. Functionally, required for both pre-rRNA processing and heterochromatic gene silencing. In terms of biological role, component of the RIX1 complex required for processing of ITS2 sequences from 35S pre-rRNA. The protein is Pre-rRNA-processing protein crb3/ipi3 (crb3) of Schizosaccharomyces pombe (strain 972 / ATCC 24843) (Fission yeast).